A 98-amino-acid chain; its full sequence is Cystatin-B (98 aa).

Residues 4-83 form the Cystatin domain; sequence GGTSQPVDAD…PCNGETLELS (80 aa). The Secondary area of contact motif lies at 46–50; it reads QCVPG.

The protein belongs to the cystatin family. In terms of tissue distribution, ubiquitously expressed in normal and lipopolysaccharide (LPS)-stimulated tissues including brain, eye, gullet, heart, liver, muscle, stomach, kidney, spleen, pyloric ceca, intestine and gill.

The protein resides in the cytoplasm. With respect to regulation, greatly decreased inhibitory activity against papain protease by metal ions including ZnSO(4), CuSO(4), HgCl(2) and CoCl(2). Decreased inhibitory activity against papain protease by detergents including Tween 20, SDS and Brij 35. Thiol protease inhibitor. Has high papain, bovine cathepsin B and fish cathepsins F and X inhibitory activity and inhibits fish cathepsins L, S and K to a lesser extent in vitro. May be involved in innate immunity. This Paralichthys olivaceus (Bastard halibut) protein is Cystatin-B.